Reading from the N-terminus, the 146-residue chain is Hemoglobin subunit beta (146 aa).

Residues 2 to 146 (QWTAEEKQLI…VAHALARKYH (145 aa)) enclose the Globin domain. Heme b is bound by residues H63 and H92.

It belongs to the globin family. In terms of assembly, heterotetramer of two alpha chains and two beta chains. As to expression, red blood cells.

Involved in oxygen transport from the lung to the various peripheral tissues. The polypeptide is Hemoglobin subunit beta (HBB) (Apus apus (Common swift)).